The following is a 158-amino-acid chain: UPF0178 protein RPA2191 (158 aa).

Belongs to the UPF0178 family.

This chain is UPF0178 protein RPA2191, found in Rhodopseudomonas palustris (strain ATCC BAA-98 / CGA009).